The primary structure comprises 146 residues: 3-dehydroquinate dehydratase (146 aa).

Residue Tyr-23 is the Proton acceptor of the active site. Substrate is bound by residues Asn-74, His-80, and Asp-87. His-100 serves as the catalytic Proton donor. Residues 101-102 and Arg-111 contribute to the substrate site; that span reads IS.

This sequence belongs to the type-II 3-dehydroquinase family. In terms of assembly, homododecamer.

The catalysed reaction is 3-dehydroquinate = 3-dehydroshikimate + H2O. It functions in the pathway metabolic intermediate biosynthesis; chorismate biosynthesis; chorismate from D-erythrose 4-phosphate and phosphoenolpyruvate: step 3/7. In terms of biological role, catalyzes a trans-dehydration via an enolate intermediate. This Bacillus mycoides (strain KBAB4) (Bacillus weihenstephanensis) protein is 3-dehydroquinate dehydratase.